The chain runs to 277 residues: Collectin-10 (277 aa).

An N-terminal signal peptide occupies residues 1–27 (MNGFRVLLRSNLSMLLLLALLHFQSLG). Asparagine 11 carries N-linked (GlcNAc...) asparagine glycosylation. The disordered stretch occupies residues 41–103 (THTISPGPKG…IGKKGDKGEK (63 aa)). Residues 45–103 (SPGPKGDDGERGDTGEEGKDGKVGRQGPKGVKGELGDMGAQGNIGKSGPIGKKGDKGEK) form the Collagen-like domain. Over residues 49–67 (KGDDGERGDTGEEGKDGKV) the composition is skewed to basic and acidic residues. A C-type lectin domain is found at 155–271 (TEEKFYYIVQ…CHLTMYFVCE (117 aa)). Intrachain disulfides connect cysteine 176-cysteine 270 and cysteine 248-cysteine 262. An N-linked (GlcNAc...) asparagine glycan is attached at asparagine 258.

This sequence belongs to the COLEC10/COLEC11 family. In terms of tissue distribution, expressed mainly in the liver and stomach, but also in muscles, testes, and intestines.

It is found in the secreted. The protein resides in the golgi apparatus. Its subcellular location is the cytoplasm. Its function is as follows. Lectin that binds to various sugars: galactose &gt; mannose = fucose &gt; N-acetylglucosamine &gt; N-acetylgalactosamine. Acts as a chemoattractant, probably involved in the regulation of cell migration. The sequence is that of Collectin-10 (Colec10) from Mus musculus (Mouse).